Here is a 218-residue protein sequence, read N- to C-terminus: LOB domain-containing protein 29 (218 aa).

The 103-residue stretch at 10 to 112 (SPCGACKFLR…AELEILKQQA (103 aa)) folds into the LOB domain.

It belongs to the LOB domain-containing protein family. In terms of tissue distribution, expressed in roots.

Functionally, involved in lateral root formation. Regulated by the transcriptional activators ARF7 and ARF19. This is LOB domain-containing protein 29 (LBD29) from Arabidopsis thaliana (Mouse-ear cress).